The primary structure comprises 1207 residues: DNA-directed RNA polymerase subunit beta (1207 aa).

This sequence belongs to the RNA polymerase beta chain family. In terms of assembly, the RNAP catalytic core consists of 2 alpha, 1 beta, 1 beta' and 1 omega subunit. When a sigma factor is associated with the core the holoenzyme is formed, which can initiate transcription.

It catalyses the reaction RNA(n) + a ribonucleoside 5'-triphosphate = RNA(n+1) + diphosphate. Functionally, DNA-dependent RNA polymerase catalyzes the transcription of DNA into RNA using the four ribonucleoside triphosphates as substrates. The protein is DNA-directed RNA polymerase subunit beta of Enterococcus faecalis (strain ATCC 700802 / V583).